Reading from the N-terminus, the 315-residue chain is Ribosomal protein L11 methyltransferase (315 aa).

Thr-164, Gly-185, Asp-207, and Asn-249 together coordinate S-adenosyl-L-methionine.

It belongs to the methyltransferase superfamily. PrmA family.

The protein resides in the cytoplasm. It carries out the reaction L-lysyl-[protein] + 3 S-adenosyl-L-methionine = N(6),N(6),N(6)-trimethyl-L-lysyl-[protein] + 3 S-adenosyl-L-homocysteine + 3 H(+). Functionally, methylates ribosomal protein L11. The protein is Ribosomal protein L11 methyltransferase of Lactobacillus johnsonii (strain CNCM I-12250 / La1 / NCC 533).